The primary structure comprises 878 residues: Phosphoenolpyruvate carboxylase (878 aa).

Active-site residues include histidine 137 and lysine 545.

This sequence belongs to the PEPCase type 1 family. Requires Mg(2+) as cofactor.

It carries out the reaction oxaloacetate + phosphate = phosphoenolpyruvate + hydrogencarbonate. In terms of biological role, forms oxaloacetate, a four-carbon dicarboxylic acid source for the tricarboxylic acid cycle. The protein is Phosphoenolpyruvate carboxylase of Yersinia pestis bv. Antiqua (strain Antiqua).